Reading from the N-terminus, the 83-residue chain is Consomatin Rs1 (83 aa).

The first 22 residues, 1–22 (MQTAYWVMVMMMVWITAPLSEG), serve as a signal peptide directing secretion. A propeptide spanning residues 23 to 55 (GKLNNVIRGLVPDDVTPKRISQSLISRRRFDSR) is cleaved from the precursor. Cysteine 62 and cysteine 67 are oxidised to a cystine. A D-tryptophan modification is found at tryptophan 64. A 4-hydroxyproline modification is found at proline 68. The propeptide occupies 71-83 (LHGDNYDLKEKDK).

The protein belongs to the conotoxin C superfamily. Consomatin family. As to expression, expressed by the venom duct.

The protein localises to the secreted. Functionally, moderately activates human somatostatin receptors (SSTR) with a preferential activation of SSTR1 and SSTR4. In vivo, does not cause behavioral changes in mice within a few minutes of intracranial injection, but causes a progressive loss of movement thereafter. Four to five hours after injection, mice recover, even with the highest dose tested. Shows antinociception and antihyperalgesia activities in two mouse models of acute pain, most probably by acting outside the central nervous system. In Conus raulsilvai (Sea snail), this protein is Consomatin Rs1.